Reading from the N-terminus, the 96-residue chain is Co-chaperonin GroES (96 aa).

Belongs to the GroES chaperonin family. Heptamer of 7 subunits arranged in a ring. Interacts with the chaperonin GroEL.

The protein localises to the cytoplasm. Functionally, together with the chaperonin GroEL, plays an essential role in assisting protein folding. The GroEL-GroES system forms a nano-cage that allows encapsulation of the non-native substrate proteins and provides a physical environment optimized to promote and accelerate protein folding. GroES binds to the apical surface of the GroEL ring, thereby capping the opening of the GroEL channel. In Syntrophomonas wolfei subsp. wolfei (strain DSM 2245B / Goettingen), this protein is Co-chaperonin GroES.